The sequence spans 201 residues: ATP-dependent Clp protease proteolytic subunit (201 aa).

The active-site Nucleophile is serine 98. Residue histidine 123 is part of the active site.

This sequence belongs to the peptidase S14 family. Fourteen ClpP subunits assemble into 2 heptameric rings which stack back to back to give a disk-like structure with a central cavity, resembling the structure of eukaryotic proteasomes.

The protein localises to the cytoplasm. It carries out the reaction Hydrolysis of proteins to small peptides in the presence of ATP and magnesium. alpha-casein is the usual test substrate. In the absence of ATP, only oligopeptides shorter than five residues are hydrolyzed (such as succinyl-Leu-Tyr-|-NHMec, and Leu-Tyr-Leu-|-Tyr-Trp, in which cleavage of the -Tyr-|-Leu- and -Tyr-|-Trp bonds also occurs).. Its function is as follows. Cleaves peptides in various proteins in a process that requires ATP hydrolysis. Has a chymotrypsin-like activity. Plays a major role in the degradation of misfolded proteins. In Neorickettsia sennetsu (strain ATCC VR-367 / Miyayama) (Ehrlichia sennetsu), this protein is ATP-dependent Clp protease proteolytic subunit.